Consider the following 299-residue polypeptide: Recombination-associated protein RdgC (299 aa).

Belongs to the RdgC family.

It is found in the cytoplasm. The protein localises to the nucleoid. Its function is as follows. May be involved in recombination. The polypeptide is Recombination-associated protein RdgC (Bordetella bronchiseptica (strain ATCC BAA-588 / NCTC 13252 / RB50) (Alcaligenes bronchisepticus)).